The sequence spans 476 residues: Salicylate biosynthesis isochorismate synthase (476 aa).

The tract at residues 181–202 (RRRPSGPTAGAQGDASAQERRQ) is disordered.

The protein belongs to the isochorismate synthase family.

The enzyme catalyses chorismate = isochorismate. The protein operates within siderophore biosynthesis; salicylate biosynthesis. Its function is as follows. Involved in the conversion of chorismate to salicylate. The sequence is that of Salicylate biosynthesis isochorismate synthase (pchA) from Pseudomonas aeruginosa (strain ATCC 15692 / DSM 22644 / CIP 104116 / JCM 14847 / LMG 12228 / 1C / PRS 101 / PAO1).